The chain runs to 1015 residues: Transposase for transposon Tn3 (1015 aa).

It belongs to the transposase 7 family.

Its function is as follows. Required for transposition of transposon Tn3. The polypeptide is Transposase for transposon Tn3 (tnpA) (Escherichia coli).